A 230-amino-acid chain; its full sequence is MLSLSQPCFSGTLLMLLASNFLLWKNVAPVPMYASLDEYGEMSIYDLLDHVTILSHNVSELTAEMHRIFMEDVRYKPGRWFSDRYLTACHTSTLTISVSKEGARQMPGVFLVKEMISMLTAWRYPLYHIITELSYMEQAPDEIISRARNIEEKIIVLIEALRGILSKIQPGPPENERYPVWNELASLQSPDEDLRHLTLFNLFQCLVKDSRKIDSSIRLLKCKLLYNRDC.

A signal peptide spans 1-29 (MLSLSQPCFSGTLLMLLASNFLLWKNVAP). A glycan (N-linked (GlcNAc...) asparagine) is linked at asparagine 57. Intrachain disulfides connect cysteine 89/cysteine 205 and cysteine 222/cysteine 230.

The protein belongs to the somatotropin/prolactin family. In terms of tissue distribution, expressed in both placenta and decidual tissues. Detected first in deciduals cells early in gestation and in trophoblasts later in pregnancy.

It is found in the secreted. The polypeptide is Prolactin-6A1 (Prl6a1) (Mus musculus (Mouse)).